We begin with the raw amino-acid sequence, 417 residues long: Candidapepsin-4 (417 aa).

The first 18 residues, 1-18 (MFLQNILSVLAFALLIDA), serve as a signal peptide directing secretion. A propeptide spans 19–75 (APVKRSTGFVTLDFNVKRSLVDPKDPTVEVKRSPLFLDIEPTEIPVDDTGRNDVGKR) (activation peptide). One can recognise a Peptidase A1 domain in the interval 89 to 403 (YSADITIGSN…DLDDRKISMA (315 aa)). Asp-107 is an active-site residue. Cys-122 and Cys-134 are disulfide-bonded. A glycan (N-linked (GlcNAc...) asparagine) is linked at Asn-137. The active site involves Asp-293. Residues Cys-331 and Cys-369 are joined by a disulfide bond.

It belongs to the peptidase A1 family. O-glycosylated.

The protein localises to the secreted. It carries out the reaction Preferential cleavage at the carboxyl of hydrophobic amino acids, but fails to cleave 15-Leu-|-Tyr-16, 16-Tyr-|-Leu-17 and 24-Phe-|-Phe-25 of insulin B chain. Activates trypsinogen, and degrades keratin.. In Candida albicans (strain WO-1) (Yeast), this protein is Candidapepsin-4 (SAP4).